A 128-amino-acid chain; its full sequence is Glycine cleavage system H protein (128 aa).

The Lipoyl-binding domain maps to 24–106 (SVTVGITAHA…YGDGWFFKIK (83 aa)). K65 carries the post-translational modification N6-lipoyllysine.

Belongs to the GcvH family. In terms of assembly, the glycine cleavage system is composed of four proteins: P, T, L and H. It depends on (R)-lipoate as a cofactor.

Its function is as follows. The glycine cleavage system catalyzes the degradation of glycine. The H protein shuttles the methylamine group of glycine from the P protein to the T protein. In Chromobacterium violaceum (strain ATCC 12472 / DSM 30191 / JCM 1249 / CCUG 213 / NBRC 12614 / NCIMB 9131 / NCTC 9757 / MK), this protein is Glycine cleavage system H protein.